A 1729-amino-acid chain; its full sequence is Zinc finger CCCH domain-containing protein 13 (1729 aa).

Disordered regions lie at residues 1 to 40 and 57 to 156; these read MSKI…TTET and CRFI…NGDI. Residues 10 to 23 are compositionally biased toward polar residues; that stretch reads VENTKTISESTSRR. The C3H1-type zinc-finger motif lies at 36-64; that stretch reads STTETQCRNWLKTGSCLYGNTCRFIHGPS. A phosphoserine mark is found at Ser64 and Ser77. Basic and acidic residues predominate over residues 76 to 136; that stretch reads RSPERPTGDL…IKIVKERTPE (61 aa). Residues 162–196 adopt a coiled-coil conformation; that stretch reads HELSLEMKRQKIQRELMKLEQENMDKREEIIIQKE. A Glycyl lysine isopeptide (Lys-Gly) (interchain with G-Cter in SUMO2) cross-link involves residue Lys179. The span at 182-193 shows a compositional bias: basic and acidic residues; that stretch reads QENMDKREEIII. Disordered regions lie at residues 182 to 528 and 581 to 1527; these read QENM…IRDV and DVYQ…PISD. 4 positions are modified to phosphoserine: Ser198, Ser207, Ser209, and Ser211. Positions 204 to 213 are enriched in low complexity; the sequence is SKLSPSPSLR. The span at 214–224 shows a compositional bias: basic residues; it reads KSSKSPKRKSS. Residue Ser242 is modified to Phosphoserine. The segment covering 245–254 has biased composition (polar residues); sequence LDQQRNSKGN. A Phosphothreonine modification is found at Thr263. The residue at position 265 (Ser265) is a Phosphoserine. Positions 283–315 are enriched in basic and acidic residues; it reads KYKVKDRIEEKPRDGKDRGRDFEKQREKRDKPR. Phosphoserine is present on residues Ser316, Ser318, Ser324, and Ser327. Low complexity predominate over residues 321-345; the sequence is QHHSPLSSRHHSSSSQSGSSIQRHS. Phosphothreonine occurs at positions 353 and 363. A compositionally biased stretch (polar residues) spans 358 to 368; the sequence is YQRTLTPSLRR. A phosphoserine mark is found at Ser369, Ser371, and Ser380. 2 stretches are compositionally biased toward basic and acidic residues: residues 393-528 and 581-636; these read PMRE…IRDV and DVYQ…EKGS. The span at 639–654 shows a compositional bias: polar residues; the sequence is TRGSQMDSHSSGSNYH. Basic and acidic residues predominate over residues 655–701; it reads DSWETRSSYPERDRYPERDTRDPARDSSFERRHGERDRRDNRERDQR. Position 704 is a phosphoserine (Ser704). A coiled-coil region spans residues 706–865; the sequence is IRHQGRSEEL…KERERQREWE (160 aa). The span at 710-897 shows a compositional bias: basic and acidic residues; it reads GRSEELERDE…IPRDSHEERK (188 aa). A phosphoserine mark is found at Ser907, Ser909, Ser913, Ser921, Ser924, Ser929, Ser949, Ser951, and Ser953. Positions 920–938 are enriched in basic and acidic residues; the sequence is HSPDSDTYHSGDDKNEKHR. A compositionally biased stretch (basic and acidic residues) spans 957–1035; the sequence is LTEDRQGRWK…GSDRAHDEKK (79 aa). Thr958 carries the post-translational modification Phosphothreonine. Over residues 1036–1046 the composition is skewed to basic residues; the sequence is KAKAPKKPVKK. Over residues 1047 to 1065 the composition is skewed to basic and acidic residues; it reads KKEEDVGVERGNLETHEDS. Phosphoserine occurs at positions 1069, 1086, 1090, and 1093. Over residues 1072–1086 the composition is skewed to basic residues; the sequence is KGQKKKNIEKKRKRS. Thr1109 is modified (phosphothreonine). Basic and acidic residues-rich tracts occupy residues 1114-1137 and 1149-1159; these read IKEE…KKEN and PDRTEGLEAEH. Low complexity-rich tracts occupy residues 1160-1176 and 1184-1218; these read TAAT…LSSL and AAAS…TNGS. Residues 1228-1253 are compositionally biased toward basic and acidic residues; it reads ARGEKVEVSHVTLEDTPHRKLVDQKR. A phosphoserine mark is found at Ser1256, Ser1259, Ser1273, and Ser1275. The span at 1278-1288 shows a compositional bias: basic and acidic residues; it reads SAHRSGDDQGS. The residue at position 1295 (Ser1295) is a Phosphoserine. 2 stretches are compositionally biased toward basic and acidic residues: residues 1296–1351 and 1359–1440; these read GSRD…DRQV and DSRD…ERTF. Phosphoserine occurs at positions 1427, 1443, 1447, 1467, 1470, 1499, and 1526. Basic and acidic residues-rich tracts occupy residues 1447–1482 and 1490–1499; these read SGKR…DRDL and DVSKAERTES.

Belongs to the ZC3H13 family. As to quaternary structure, component of the WMM complex, a N6-methyltransferase complex composed of a catalytic subcomplex, named MAC, and of an associated subcomplex, named MACOM. The MAC subcomplex is composed of METTL3 and METTL14. The MACOM subcomplex is composed of WTAP, ZC3H13, CBLL1/HAKAI, VIRMA, and, in some cases of RBM15 (RBM15 or RBM15B). Also a component of a MACOM-like complex, named WTAP complex, composed of WTAP, ZC3H13, CBLL1/HAKAI, VIRMA, RBM15, BCLAF1 and THRAP3.

The protein resides in the nucleus speckle. It localises to the nucleus. The protein localises to the nucleoplasm. Its function is as follows. Associated component of the WMM complex, a complex that mediates N6-methyladenosine (m6A) methylation of RNAs, a modification that plays a role in the efficiency of mRNA splicing and RNA processing. Acts as a key regulator of m6A methylation by promoting m6A methylation of mRNAs at the 3'-UTR. Controls embryonic stem cells (ESCs) pluripotency via its role in m6A methylation. In the WMM complex, anchors component of the MACOM subcomplex in the nucleus. Also required for bridging WTAP to the RNA-binding component RBM15 (RBM15 or RBM15B). This is Zinc finger CCCH domain-containing protein 13 from Mus musculus (Mouse).